The sequence spans 232 residues: uncharacterized protein (232 aa).

The chain crosses the membrane as a helical span at residues 209 to 229 (ATISTPALGYAYFLFTLTLVF).

The protein resides in the host membrane. This is an uncharacterized protein from Saccharolobus islandicus (Sulfolobus islandicus).